Here is a 326-residue protein sequence, read N- to C-terminus: Transcription cofactor vestigial-like protein 3 (326 aa).

Positions 57–80 (VTLPSKQEEEDEEEEEEEKDQPAE) are disordered. A Glycyl lysine isopeptide (Lys-Gly) (interchain with G-Cter in SUMO2) cross-link involves residue Lys-62. The segment covering 64–75 (EEEDEEEEEEEK) has biased composition (acidic residues). Lys-126 is covalently cross-linked (Glycyl lysine isopeptide (Lys-Gly) (interchain with G-Cter in SUMO2)). Disordered regions lie at residues 175–203 (PPGT…PPAV) and 233–256 (HAHM…SALD). Residues 233-249 (HAHMHHRHRHHHHHHHP) show a composition bias toward basic residues.

This sequence belongs to the vestigial family. Enriched in placenta.

It localises to the nucleus. Its function is as follows. May act as a specific coactivator for the mammalian TEFs. The polypeptide is Transcription cofactor vestigial-like protein 3 (VGLL3) (Homo sapiens (Human)).